The chain runs to 788 residues: Protein translocase subunit SecA 2 (788 aa).

ATP is bound by residues Gln77, 95–99 (GEGKT), and Asp491.

The protein belongs to the SecA family. Monomer and homodimer. Part of the essential Sec protein translocation apparatus which comprises SecA, SecYEG and auxiliary proteins SecDF. Other proteins may also be involved.

Its subcellular location is the cell membrane. The protein localises to the cytoplasm. It catalyses the reaction ATP + H2O + cellular proteinSide 1 = ADP + phosphate + cellular proteinSide 2.. In terms of biological role, part of the Sec protein translocase complex. Interacts with the SecYEG preprotein conducting channel. Has a central role in coupling the hydrolysis of ATP to the transfer of proteins into and across the cell membrane, serving as an ATP-driven molecular motor driving the stepwise translocation of polypeptide chains across the membrane. The protein is Protein translocase subunit SecA 2 of Lactobacillus johnsonii (strain CNCM I-12250 / La1 / NCC 533).